The sequence spans 1084 residues: Cellulose synthase A catalytic subunit 6 [UDP-forming] (1084 aa).

Residue Met1 is modified to N-acetylmethionine. At 1–277 the chain is on the cytoplasmic side; sequence MNTGGRLIAG…KSSKINPYRM (277 aa). Zn(2+) is bound by residues Cys39, Cys42, Cys58, Cys61, Cys66, Cys69, Cys81, and Cys84. The RING-type; degenerate zinc-finger motif lies at 39 to 85; sequence CQICRDEIELTVDGEPFVACNECAFPVCRPCYEYERREGNQACPQCK. The helical transmembrane segment at 278–298 threads the bilayer; sequence LIVLRLVILGLFFHYRILHPV. The Extracellular portion of the chain corresponds to 299–300; sequence KD. The chain crosses the membrane as a helical span at residues 301-321; that stretch reads AYALWLISVICEIWFAVSWVL. At 322–868 the chain is on the cytoplasmic side; sequence DQFPKWYPIE…INSVVYPWTS (547 aa). UDP-alpha-D-glucose-binding residues include Ser360, Lys366, Glu367, and Asp396. Residue Asp396 is part of the active site. A coiled-coil region spans residues 450–476; that stretch reads VRERRAMKRDYEEFKVKINALVATAQK. Lys537 contacts UDP-alpha-D-glucose. Residues Lys538 and Asp562 each coordinate Mn(2+). Positions 675 to 703 form a coiled coil; sequence RKAKTVAADKKKKNREASKQIHALENIEE. Asp785 is a catalytic residue. The chain crosses the membrane as a helical span at residues 869-889; that stretch reads LPLIVYCSLPAICLLTGKFIV. Over 890 to 894 the chain is Extracellular; that stretch reads PEISN. The chain crosses the membrane as a helical span at residues 895–915; the sequence is YASILFMALFSSIAITGILEM. Residues 916–930 lie on the Cytoplasmic side of the membrane; it reads QWGKVGIDDWWRNEQ. Residues 931-951 form a helical membrane-spanning segment; that stretch reads FWVIGGVSAHLFALFQGLLKV. Topologically, residues 952-980 are extracellular; it reads LAGVDTNFTVTSKAADDGEFSDLYLFKWT. Asn958 is a glycosylation site (N-linked (GlcNAc...) asparagine). The helical transmembrane segment at 981-1001 threads the bilayer; it reads SLLIPPMTLLIINVIGVIVGV. The Cytoplasmic segment spans residues 1002 to 1012; it reads SDAISNGYDSW. A helical transmembrane segment spans residues 1013–1033; that stretch reads GPLFGRLFFALWVIIHLYPFL. Over 1034–1042 the chain is Extracellular; the sequence is KGLLGKQDR. Residues 1043 to 1063 traverse the membrane as a helical segment; sequence MPTIIVVWSILLASILTLLWV. Over 1064–1084 the chain is Cytoplasmic; that stretch reads RVNPFVAKGGPILEICGLDCL.

The protein belongs to the glycosyltransferase 2 family. Plant cellulose synthase subfamily. Interacts with CESA1 and CESA3. Interacts with STL1 and STL2, but not with GOT1. Binds to CSI1 and CSI3. Interacts with PAT24/TIP1. It depends on Zn(2+) as a cofactor. Mn(2+) is required as a cofactor. In terms of processing, S-acylated. In terms of tissue distribution, expressed in germinating seeds, seedlings, roots, stems, leaves and flowers. Not present in mature flowers.

The protein resides in the cell membrane. It catalyses the reaction [(1-&gt;4)-beta-D-glucosyl](n) + UDP-alpha-D-glucose = [(1-&gt;4)-beta-D-glucosyl](n+1) + UDP + H(+). Its pathway is glycan metabolism; plant cellulose biosynthesis. Catalytic subunit of cellulose synthase terminal complexes ('rosettes'), required for beta-1,4-glucan microfibril crystallization, a major mechanism of the cell wall formation. Involved in the primary cell wall formation. The presence of each protein CESA1 and CESA6 is critical for cell expansion. The hypocotyl elongation is based on a CESA6-dependent cell elongation in dark and a CESA6-independent cell elongation in light. The transition between these two mechanisms requires photosynthesis and PHYB, but not CRY1. The CESA6-dependent cell elongation seems to be independent of gibberellic acid, auxin and ethylene. May be involved in sensitivity to isoxaben. Associates with and moves along cortical microtubules for the process of cellulose deposition. This chain is Cellulose synthase A catalytic subunit 6 [UDP-forming], found in Arabidopsis thaliana (Mouse-ear cress).